A 295-amino-acid polypeptide reads, in one-letter code: MTAAVQSPTVNTTLNYFREVADGGLSEIRHGTVGSTRMKYNTQPVVVNDIRSNEGEFSLDKQGFQLVTSATKVKAFDEKTVKEQYYEELIDLIKETTGASFVLPMNHLVRQQLWESIHEIPADADDAAIVDTTAAPAMSVHIDQTPEGAELILQMLMQADAGRLGKTRWGIINAWRPLKLIRREPLAVCDVRSVPDSDLRVLGVIYPLPDGMVYNGSSDLKSDTWNVAANPEHKWYYASNMTPDEVLLLKMYDTKLDGRARKCPHSAFKRSYDEGPARESIETRCLVFWEDQERE.

The protein belongs to the asaB hydroxylase/desaturase family.

It functions in the pathway secondary metabolite biosynthesis; terpenoid biosynthesis. Functionally, hydroxylase/desaturase; part of the gene cluster that mediates the biosynthesis of enfumafungin, a glycosylated fernene-type triterpenoid with potent antifungal activity, mediated by its interaction with beta-1,3-glucan synthase and the fungal cell wall. The pathway begins with the terpene cyclase-glycosyl transferase fusion protein that most likely uses 2,3-oxidosqualene as substrate and catalyzes glycosylation immediately after cyclization. The fernene glycoside then could be processed by the desaturase efuI which catalyzes isomerization of a double bond established by efuA to form the core structure. The latter would then undergo a series of hydroxylations in unknown order at C-2, C-19, C-23 and C-25, which would be catalyzed by two of the three cytochrome P450 monooxygenases efuB, efuG or efuH. The hydroxy-group at C-25 becomes oxidized by the dehydrogenase efuE to enable a spontaneous, non-enzymatic hemiacetal formation with C-23. After hydroxylation at C-2, acetylation by the acetyltransferase efuC takes place. The final steps in enfumafungin biosynthesis require expansion of the 5-membered ring by lactonization via a Baeyer-Villiger reaction mediated by one of the BGC's cytochrome P450 monooxygenases (efuB, efuG or efuH) followed by ring cleavage. This type of reaction would establish a double bond between C-20 and C-21 which could be reduced by the reductase efuL to form the final product. The polypeptide is Hydroxylase/desaturase efuI (Hormonema carpetanum).